The following is a 265-amino-acid chain: uncharacterized protein (265 aa).

The N-terminal stretch at 1 to 22 (MGYFKRVLLYIIVMVLSVFIIG) is a signal peptide. Cys23 is lipidated: N-palmitoyl cysteine. Cys23 is lipidated: S-diacylglycerol cysteine.

The protein belongs to the staphylococcal tandem lipoprotein family.

It is found in the cell membrane. This is an uncharacterized protein from Staphylococcus aureus (strain MSSA476).